Here is a 355-residue protein sequence, read N- to C-terminus: Phosphatidylinositol:ceramide inositolphosphotransferase (355 aa).

Residues 1–44 lie on the Cytoplasmic side of the membrane; sequence MISYPFFSLSPPGLVPPPMAVPPVEMYSGSFWNRMRKPLPLRTQ. Residues 45 to 65 form a helical membrane-spanning segment; sequence VIRFTVVFVIVSFILAVALQI. Residues 66–89 lie on the Extracellular side of the membrane; the sequence is THERMPDPKVTKPLPDLGFELLTK. A helical transmembrane segment spans residues 90-110; sequence ISFLSVVTDVLIAFLSSLSFF. Over 111 to 165 the chain is Cytoplasmic; that stretch reads TLWKLYLLHRHCVGSGEPELPCNIPGVSRFFLSVWLCKENCRIELRNVHTIAWIR. Residues 166–186 traverse the membrane as a helical segment; it reads FITSYALLLLFRSLVIVMTSM. Residues 187–205 lie on the Extracellular side of the membrane; sequence PTPVDKCQNPPKIENPVKN. The chain crosses the membrane as a helical span at residues 206–226; that stretch reads VILTVLTAGGGSIHCGDLMYS. Topologically, residues 227–251 are cytoplasmic; the sequence is GHTVILTLHLMFHWIYGAMVHWSFR. Active-site residues include His-228, His-271, and Asp-275. Residues 252-272 form a helical membrane-spanning segment; the sequence is PVVTVVAIFGYYCIVASRSHY. At 273–275 the chain is on the extracellular side; that stretch reads TDD. The chain crosses the membrane as a helical span at residues 276 to 296; that stretch reads VLVAIYLTIATFIAVGHNADG. Residues 297-355 are Cytoplasmic-facing; the sequence is APWQLQLFIRWLPCCGANSREVTEDSQPVMVAFKSEAVDELRERDDSAGLSCEVSTNEV.

It belongs to the sphingomyelin synthase family.

Its subcellular location is the membrane. In terms of biological role, bidirectional lipid inositolphosphotransferase capable of converting phosphatidylinositol (PI) and ceramide to inositol-phosphorylceramide (IPC) and diacylglycerol (DAG) and vice versa. Direction is dependent on the relative concentrations of DAG and ceramide as phosphoinositol acceptors. Does not function strictly as a SM synthase. Essential for viability of the pathogenic bloodstream stage of this human protozoan parasite and, consequently, can be considered as potential drug target. In Trypanosoma brucei brucei (strain 927/4 GUTat10.1), this protein is Phosphatidylinositol:ceramide inositolphosphotransferase.